The primary structure comprises 276 residues: Undecaprenyl-diphosphatase (276 aa).

A run of 6 helical transmembrane segments spans residues 43–63 (RAMA…VWEF), 85–105 (GNLL…ADLI), 109–129 (LFNP…MLWA), 183–203 (AATE…AVYS), 214–234 (ADLP…MIAV), and 249–269 (FAWY…FGWV).

This sequence belongs to the UppP family.

It is found in the cell inner membrane. It carries out the reaction di-trans,octa-cis-undecaprenyl diphosphate + H2O = di-trans,octa-cis-undecaprenyl phosphate + phosphate + H(+). Its function is as follows. Catalyzes the dephosphorylation of undecaprenyl diphosphate (UPP). Confers resistance to bacitracin. In Pseudomonas putida (strain GB-1), this protein is Undecaprenyl-diphosphatase.